Consider the following 290-residue polypeptide: Putative beta-lactamase HcpC (290 aa).

The signal sequence occupies residues 1–25 (MLENVKKSFFRVLCLGALCLGGLMA). TPR repeat units follow at residues 29–62 (PKEL…KENS), 64–98 (CFNL…NYSN), 100–133 (CHLL…LKYA), 134–170 (EGCA…NDGD), 172–205 (CTIL…LKDS), 206–242 (PGCF…ENGG), and 244–278 (CFNL…GAKG). Cystine bridges form between cysteine 56/cysteine 64, cysteine 92/cysteine 100, cysteine 128/cysteine 136, cysteine 164/cysteine 172, cysteine 200/cysteine 208, cysteine 236/cysteine 244, and cysteine 272/cysteine 280.

Belongs to the hcp beta-lactamase family.

The protein resides in the secreted. The catalysed reaction is a beta-lactam + H2O = a substituted beta-amino acid. Its function is as follows. May hydrolyze 6-aminopenicillinic acid and 7-aminocephalosporanic acid (ACA) derivatives. This Helicobacter pylori (strain ATCC 700392 / 26695) (Campylobacter pylori) protein is Putative beta-lactamase HcpC (hcpC).